The chain runs to 331 residues: 3-dehydrosphinganine reductase TSC10B (331 aa).

Topologically, residues 1–7 (MAAIFSL) are lumenal. Residues 8 to 28 (FLFFILFIVSLLIILSFIVRP) form a helical membrane-spanning segment. Topologically, residues 29 to 262 (RSVTIPIKFR…ICFDGIKAGK (234 aa)) are cytoplasmic. NADPH contacts are provided by G44, S46, S47, G48, R69, K73, and D95. The GXSXG signature appears at 44–48 (GGSSG). S172 (proton donor) is an active-site residue. Y186 (proton acceptor) is an active-site residue. The NADP(+) site is built by Y186 and K190. K190 serves as the catalytic Lowers pKa of active site Tyr. A helical membrane pass occupies residues 263-283 (FTVTCHFIGFLLSIASTGMSP). Over 284–286 (QGS) the chain is Lumenal. Residues 287-307 (FWLALTEVMFGGLIRLASLVF) form a helical membrane-spanning segment. Topologically, residues 308–331 (QWQWYKTIEKWSQRNKKEVNSKLA) are cytoplasmic.

It belongs to the short-chain dehydrogenases/reductases (SDR) family. Expressed in roots, leaves, stems and flowers.

The protein localises to the endoplasmic reticulum membrane. It catalyses the reaction sphinganine + NADP(+) = 3-oxosphinganine + NADPH + H(+). It participates in lipid metabolism; sphingolipid metabolism. In terms of biological role, catalyzes the reduction of 3'-oxosphinganine (3-ketodihydrosphingosine/KDS) to sphinganine (dihydrosphingosine/DHS), the second step of de novo sphingolipid biosynthesis. In plants, sphingolipids seems to play a critical role in mineral ion homeostasis, most likely through their involvement in the ion transport functionalities of membrane systems in the root. Is stereospecific for D-erythro-DHS production and does not produce L-threo-DHS. The chain is 3-dehydrosphinganine reductase TSC10B (TSC10B) from Arabidopsis thaliana (Mouse-ear cress).